Reading from the N-terminus, the 101-residue chain is NADH-ubiquinone oxidoreductase chain 5 (101 aa).

The next 3 helical transmembrane spans lie at 12–32 (IALF…SGVI), 48–68 (FLFI…FICF), and 79–99 (LVIY…LFII).

It belongs to the complex I subunit 5 family.

The protein resides in the mitochondrion inner membrane. The catalysed reaction is a ubiquinone + NADH + 5 H(+)(in) = a ubiquinol + NAD(+) + 4 H(+)(out). In terms of biological role, core subunit of the mitochondrial membrane respiratory chain NADH dehydrogenase (Complex I) that is believed to belong to the minimal assembly required for catalysis. Complex I functions in the transfer of electrons from NADH to the respiratory chain. The immediate electron acceptor for the enzyme is believed to be ubiquinone. This chain is NADH-ubiquinone oxidoreductase chain 5 (ND5), found in Leishmania tarentolae (Sauroleishmania tarentolae).